We begin with the raw amino-acid sequence, 2399 residues long: Norsolorinic acid synthase (2399 aa).

Positions 10–247 are starter unit:ACP transacylase (SAT) domain; the sequence is LVFGDQTYDF…RQIPIYVPAH (238 aa). A Ketosynthase family 3 (KS3) domain is found at 372-805; the sequence is KSKLAIVSMS…GGNTALLIED (434 aa). Active-site for beta-ketoacyl synthase activity residues include Cys544, His679, and His722. The segment at 905-1192 is malonyl-CoA:ACP transacylase (MAT) domain; that stretch reads FAFTGQGSQY…LCGMIKNILG (288 aa). Ser995 (for acyl/malonyl transferase activity) is an active-site residue. The tract at residues 1307–1327 is disordered; the sequence is VQEAPAAKTETKKMSKLDPTK. Over residues 1315 to 1327 the composition is skewed to basic and acidic residues; that stretch reads TETKKMSKLDPTK. The interval 1340-1483 is N-terminal hotdog fold; it reads HKVIEEKTEP…CTVRFTTDSQ (144 aa). Residues 1340-1658 form the PKS/mFAS DH domain; the sequence is HKVIEEKTEP…LRSVPRKALR (319 aa). Residues 1353-1658 form a product template (PT) domain region; that stretch reads QFTVETDISR…LRSVPRKALR (306 aa). His1372 (proton acceptor; for dehydratase activity) is an active-site residue. Residues 1510 to 1658 form a C-terminal hotdog fold region; sequence LTHYNTKSGY…LRSVPRKALR (149 aa). Residue Asp1570 is the Proton donor; for dehydratase activity of the active site. A disordered region spans residues 1665-1734; that stretch reads MDKGIRQRGG…AALKASVPKA (70 aa). Low complexity predominate over residues 1677–1698; the sequence is GAAKGAVAAPAPAKKMVEPVKA. Positions 1708–1723 are enriched in pro residues; that stretch reads AAPPSPSKAAPPPAPK. Low complexity predominate over residues 1724-1734; it reads PAALKASVPKA. Carrier domains follow at residues 1733-1812, 1877-1953, and 2020-2099; these read KADP…AGAA, SKVF…GGSG, and VART…TGSS. Residues Ser1770, Ser1911, and Ser2057 each carry the O-(pantetheine 4'-phosphoryl)serine modification. Over residues 2098–2115 the composition is skewed to low complexity; the sequence is SSADSDSSSVASNPADPA. The disordered stretch occupies residues 2098 to 2149; the sequence is SSADSDSSSVASNPADPAATPPRSESSDTEPDDEAPSKPKSGPGSTDSCRST. Residues 2140-2149 show a composition bias toward polar residues; sequence PGSTDSCRST. Residues 2164-2393 form a thioesterase/Claisen cyclase (TE/CLC) domain region; sequence TLFLLPDGGG…KARVNYVSDL (230 aa). The For thioesterase activity role is filled by Ser2234.

Requires pantetheine 4'-phosphate as cofactor.

The catalysed reaction is hexanoyl-[ACP] + 7 malonyl-CoA + 6 H(+) = noranthrone + holo-[ACP] + 7 CO2 + 7 CoA + 2 H2O. The protein operates within mycotoxin biosynthesis. Functionally, polyketide synthase; part of the fragmented gene cluster that mediates the biosynthesis of dothistromin (DOTH), a polyketide toxin very similar in structure to the aflatoxin precursor, versicolorin B. The first step of the pathway is the conversion of acetate to norsolorinic acid (NOR) and requires the fatty acid synthase subunits hexA and hexB, as well as the polyketide synthase pksA. PksA combines a hexanoyl starter unit and 7 malonyl-CoA extender units to synthesize the precursor NOR. The hexanoyl starter unit is provided to the acyl-carrier protein (ACP) domain by the fungal fatty acid synthase hexA/hexB. The second step is the conversion of NOR to averantin (AVN) and requires the norsolorinic acid ketoreductase nor1, which catalyzes the dehydration of norsolorinic acid to form (1'S)-averantin. The cytochrome P450 monooxygenase avnA then catalyzes the hydroxylation of AVN to 5'hydroxyaverantin (HAVN). The next step is performed by adhA that transforms HAVN to averufin (AVF). Averufin might then be converted to hydroxyversicolorone by cypX and avfA. Hydroxyversicolorone is further converted versiconal hemiacetal acetate (VHA) by moxY. VHA is then the substrate for the versiconal hemiacetal acetate esterase est1 to yield versiconal (VAL). Versicolorin B synthase vbsA then converts VAL to versicolorin B (VERB) by closing the bisfuran ring. Then, the activity of the versicolorin B desaturase verB leads to versicolorin A (VERA). DotB, a predicted chloroperoxidase, may perform epoxidation of the A-ring of VERA. Alternatively, a cytochrome P450, such as cypX or avnA could catalyze this step. It is also possible that another, uncharacterized, cytochrome P450 enzyme is responsible for this step. Opening of the epoxide could potentially be achieved by the epoxide hydrolase epoA. However, epoA seems not to be required for DOTH biosynthesis, but other epoxide hydrolases may have the ability to complement this hydrolysis. Alternatively, opening of the epoxide ring could be achieved non-enzymatically. The next step is the deoxygenation of ring A to yield the 5,8-dihydroxyanthraquinone which is most likely catalyzed by the NADPH dehydrogenase encoded by ver1. The last stages of DOTH biosynthesis are proposed to involve hydroxylation of the bisfuran. OrdB and norB might have oxidative roles here. An alternative possibility is that cytochrome P450 monoogenases such as avnA and cypX might perform these steps in addition to previously proposed steps. This Dothistroma septosporum (Red band needle blight fungus) protein is Norsolorinic acid synthase.